The primary structure comprises 461 residues: Bifunctional protein GlmU (461 aa).

The pyrophosphorylase stretch occupies residues 1–232 (MNLQIIILAA…SFEVQGINNR (232 aa)). Residues 8–11 (LAAG), Lys-22, Gln-73, and 78–79 (GT) contribute to the UDP-N-acetyl-alpha-D-glucosamine site. Position 102 (Asp-102) interacts with Mg(2+). Residues Gly-142, Glu-157, and Asn-230 each coordinate UDP-N-acetyl-alpha-D-glucosamine. Residue Asn-230 participates in Mg(2+) binding. Positions 233–253 (QQLQQLERTWQQRAANQLMEK) are linker. Residues 254–461 (GATLADANRF…WKRPVKRERD (208 aa)) form an N-acetyltransferase region. Residues Arg-336 and Lys-354 each coordinate UDP-N-acetyl-alpha-D-glucosamine. His-366 functions as the Proton acceptor in the catalytic mechanism. Tyr-369 and Asn-380 together coordinate UDP-N-acetyl-alpha-D-glucosamine. Residues Ala-383, 389–390 (NY), Ser-408, and Ala-426 each bind acetyl-CoA.

It in the N-terminal section; belongs to the N-acetylglucosamine-1-phosphate uridyltransferase family. In the C-terminal section; belongs to the transferase hexapeptide repeat family. Homotrimer. The cofactor is Mg(2+).

The protein localises to the cytoplasm. The catalysed reaction is alpha-D-glucosamine 1-phosphate + acetyl-CoA = N-acetyl-alpha-D-glucosamine 1-phosphate + CoA + H(+). It carries out the reaction N-acetyl-alpha-D-glucosamine 1-phosphate + UTP + H(+) = UDP-N-acetyl-alpha-D-glucosamine + diphosphate. Its pathway is nucleotide-sugar biosynthesis; UDP-N-acetyl-alpha-D-glucosamine biosynthesis; N-acetyl-alpha-D-glucosamine 1-phosphate from alpha-D-glucosamine 6-phosphate (route II): step 2/2. The protein operates within nucleotide-sugar biosynthesis; UDP-N-acetyl-alpha-D-glucosamine biosynthesis; UDP-N-acetyl-alpha-D-glucosamine from N-acetyl-alpha-D-glucosamine 1-phosphate: step 1/1. It functions in the pathway bacterial outer membrane biogenesis; LPS lipid A biosynthesis. Functionally, catalyzes the last two sequential reactions in the de novo biosynthetic pathway for UDP-N-acetylglucosamine (UDP-GlcNAc). The C-terminal domain catalyzes the transfer of acetyl group from acetyl coenzyme A to glucosamine-1-phosphate (GlcN-1-P) to produce N-acetylglucosamine-1-phosphate (GlcNAc-1-P), which is converted into UDP-GlcNAc by the transfer of uridine 5-monophosphate (from uridine 5-triphosphate), a reaction catalyzed by the N-terminal domain. The chain is Bifunctional protein GlmU from Legionella pneumophila (strain Paris).